A 100-amino-acid chain; its full sequence is MSLELSDVKRLSTLAQIELTTEQSAQTLDKLNGIFALVEQLRAVDTTGIEPLNHPIATMLPDLALRLREDVVSEANRRDDYQKVAPATQDGLYLVPKVIE.

It belongs to the GatC family. Heterotrimer of A, B and C subunits.

The catalysed reaction is L-glutamyl-tRNA(Gln) + L-glutamine + ATP + H2O = L-glutaminyl-tRNA(Gln) + L-glutamate + ADP + phosphate + H(+). It catalyses the reaction L-aspartyl-tRNA(Asn) + L-glutamine + ATP + H2O = L-asparaginyl-tRNA(Asn) + L-glutamate + ADP + phosphate + 2 H(+). In terms of biological role, allows the formation of correctly charged Asn-tRNA(Asn) or Gln-tRNA(Gln) through the transamidation of misacylated Asp-tRNA(Asn) or Glu-tRNA(Gln) in organisms which lack either or both of asparaginyl-tRNA or glutaminyl-tRNA synthetases. The reaction takes place in the presence of glutamine and ATP through an activated phospho-Asp-tRNA(Asn) or phospho-Glu-tRNA(Gln). The protein is Aspartyl/glutamyl-tRNA(Asn/Gln) amidotransferase subunit C of Janthinobacterium sp. (strain Marseille) (Minibacterium massiliensis).